We begin with the raw amino-acid sequence, 403 residues long: MGKHIQYQGGNFKNTAPTKYQPTDLKVEEVLINIGPQHPATHGILRLEVILDGEIVVDVVPHLGYLHRCFEKHAATLPYNQTIPFVDRLDYLAAMNSEHAFAMGVEHMLGLTGKLPRRVEYIRVLMAELNRLASHFMAIGTYGIDLGAFTSFLWLMRDREYILRLFEWASGARMLYNYIWIGGLYYDLPVGFEERCLEFITYLKPKLEEINQLLIDNTLFIKRTANVGVLPLATAINHGVSGPILRASGLRLDLRRIDGYSIYPELSFDIPIGEGLMGHVGDCWDRTWVKFQECKESIKITEQCLVRLTSDLKRTADFNPQKMVPKKVRTKAQDCYIRAENPRGELGFFFRASDNGDKPIRCKARSSSFSNLSVISSIAKGQVLADLIAIIGSIDIVLGEIDR.

The protein belongs to the complex I 49 kDa subunit family. In terms of assembly, NDH-1 is composed of 14 different subunits. Subunits NuoB, C, D, E, F, and G constitute the peripheral sector of the complex.

It is found in the cell membrane. It catalyses the reaction a quinone + NADH + 5 H(+)(in) = a quinol + NAD(+) + 4 H(+)(out). NDH-1 shuttles electrons from NADH, via FMN and iron-sulfur (Fe-S) centers, to quinones in the respiratory chain. The immediate electron acceptor for the enzyme in this species is believed to be a menaquinone. Couples the redox reaction to proton translocation (for every two electrons transferred, four hydrogen ions are translocated across the cytoplasmic membrane), and thus conserves the redox energy in a proton gradient. The sequence is that of NADH-quinone oxidoreductase subunit D from Amoebophilus asiaticus (strain 5a2).